The sequence spans 282 residues: Protease HtpX homolog (282 aa).

The next 2 helical transmembrane spans lie at 7–26 (TTVL…GAVG) and 30–49 (GMMI…YWFS). His-131 contacts Zn(2+). Glu-132 is a catalytic residue. Residue His-135 participates in Zn(2+) binding. 2 helical membrane passes run 141–161 (ILVS…ARMA) and 183–203 (LGLV…QLAI). Glu-208 is a binding site for Zn(2+).

Belongs to the peptidase M48B family. The cofactor is Zn(2+).

It localises to the cell inner membrane. This chain is Protease HtpX homolog, found in Syntrophobacter fumaroxidans (strain DSM 10017 / MPOB).